The sequence spans 414 residues: Esterase FrsA (414 aa).

It belongs to the FrsA family.

The catalysed reaction is a carboxylic ester + H2O = an alcohol + a carboxylate + H(+). Its function is as follows. Catalyzes the hydrolysis of esters. This chain is Esterase FrsA, found in Escherichia coli O7:K1 (strain IAI39 / ExPEC).